The sequence spans 591 residues: V-type ATP synthase alpha chain (591 aa).

Residue 233 to 240 coordinates ATP; it reads GPFGAGKT.

It belongs to the ATPase alpha/beta chains family.

It catalyses the reaction ATP + H2O + 4 H(+)(in) = ADP + phosphate + 5 H(+)(out). Functionally, produces ATP from ADP in the presence of a proton gradient across the membrane. The V-type alpha chain is a catalytic subunit. The chain is V-type ATP synthase alpha chain from Streptococcus pyogenes serotype M49 (strain NZ131).